Consider the following 622-residue polypeptide: Phosphomethylpyrimidine synthase (622 aa).

Residues Asn-226, Met-255, Tyr-284, His-320, 340-342 (SRG), 381-384 (DGLR), and Glu-420 each bind substrate. His-424 provides a ligand contact to Zn(2+). Substrate is bound at residue Tyr-447. His-488 provides a ligand contact to Zn(2+). Residues Cys-568, Cys-571, and Cys-576 each contribute to the [4Fe-4S] cluster site.

This sequence belongs to the ThiC family. As to quaternary structure, homodimer. [4Fe-4S] cluster serves as cofactor.

It carries out the reaction 5-amino-1-(5-phospho-beta-D-ribosyl)imidazole + S-adenosyl-L-methionine = 4-amino-2-methyl-5-(phosphooxymethyl)pyrimidine + CO + 5'-deoxyadenosine + formate + L-methionine + 3 H(+). It functions in the pathway cofactor biosynthesis; thiamine diphosphate biosynthesis. Catalyzes the synthesis of the hydroxymethylpyrimidine phosphate (HMP-P) moiety of thiamine from aminoimidazole ribotide (AIR) in a radical S-adenosyl-L-methionine (SAM)-dependent reaction. The polypeptide is Phosphomethylpyrimidine synthase (Ruthia magnifica subsp. Calyptogena magnifica).